A 947-amino-acid polypeptide reads, in one-letter code: Leucine-rich repeat-containing protein 37B (947 aa).

The N-terminal stretch at 1–27 (MSWLRFWGPWPLLTWQLLSLLVKEAQP) is a signal peptide. Over 28-905 (LVWVKDPLQL…EVPGDDYKNK (878 aa)) the chain is Extracellular. Disordered stretches follow at residues 42–88 (LGPP…ALPQ), 226–257 (YLSM…QVGL), 294–458 (EVEP…PEPT), and 484–514 (SLTE…EQKA). Polar residues predominate over residues 311–320 (SMESLAQTPL). Asparagine 358 carries an N-linked (GlcNAc...) asparagine glycan. Polar residues-rich tracts occupy residues 404–415 (GQAQHSHLTEAT), 436–445 (SPTTEETSAQ), and 495–507 (LESS…QSET). 6 LRR repeats span residues 556–577 (IFTT…VWKA), 580–601 (WTEK…SFEG), 604–625 (YLQY…TFES), 628–649 (FLQY…TFQA), 655–676 (FLHN…YLFE), and 679–699 (ALKY…KNIL). Asparagine 789 carries an N-linked (GlcNAc...) asparagine glycan. The stretch at 867-897 (DTDQQKTNYINENMEQNEQKEQKSSELMKEV) forms a coiled coil. A helical transmembrane segment spans residues 906–926 (LIFAISVTVILIILIIIFCLI). Topologically, residues 927 to 947 (EVNSHKRASEKYKDNPSISGA) are cytoplasmic.

It is found in the membrane. The protein is Leucine-rich repeat-containing protein 37B (LRRC37B) of Homo sapiens (Human).